The primary structure comprises 472 residues: Uronate isomerase (472 aa).

It belongs to the metallo-dependent hydrolases superfamily. Uronate isomerase family.

It catalyses the reaction D-glucuronate = D-fructuronate. The catalysed reaction is aldehydo-D-galacturonate = keto-D-tagaturonate. Its pathway is carbohydrate metabolism; pentose and glucuronate interconversion. In Opitutus terrae (strain DSM 11246 / JCM 15787 / PB90-1), this protein is Uronate isomerase.